The sequence spans 210 residues: Guanylate kinase (210 aa).

The Guanylate kinase-like domain occupies Gly6–Arg186. Ser13–Thr20 is an ATP binding site.

Belongs to the guanylate kinase family.

It localises to the cytoplasm. The enzyme catalyses GMP + ATP = GDP + ADP. Essential for recycling GMP and indirectly, cGMP. The polypeptide is Guanylate kinase (Anaplasma phagocytophilum (strain HZ)).